The chain runs to 402 residues: Multidrug resistance protein MdtH (402 aa).

The Cytoplasmic portion of the chain corresponds to 1–12 (MSRVSQARNLGK). A helical membrane pass occupies residues 13–33 (YFLLIDNMLVVLGFFVVFPLI). Over 34–98 (SIRFVDQMGW…GFATMGIAHE (65 aa)) the chain is Periplasmic. Residues 99-116 (PWLLWFSCLLSGLGGTLF) form a helical membrane-spanning segment. The Cytoplasmic portion of the chain corresponds to 117–138 (DPPRSALVVKLIRPQQRCRFFS). Residues 139-159 (LLMMQDSAGAVIGALLGSWLL) form a helical membrane-spanning segment. Residues 160 to 164 (QYDFR) are Periplasmic-facing. The helical transmembrane segment at 165–185 (LVCATGAVLFVLCAAFNAWLL) threads the bilayer. Topologically, residues 186–213 (PAWKLSTVRTPVREGMTRVMRDKRFVTY) are cytoplasmic. The chain crosses the membrane as a helical span at residues 214–234 (VLTLAGYYMLAVQVMLMLPIM). Over 235–243 (VNDVAGAPS) the chain is Periplasmic. Residues 244–264 (AVKWMYAIEACLSLTLLYPIA) form a helical membrane-spanning segment. Over 265–276 (RWSEKHFRLEHR) the chain is Cytoplasmic. Residues 277-297 (LMAGLLIMSLSMMPVGMVSGL) form a helical membrane-spanning segment. The Periplasmic portion of the chain corresponds to 298-299 (QQ). Residues 300–320 (LFTLICLFYIGSIIAEPARET) traverse the membrane as a helical segment. Residues 321–339 (LSALLADARARGSYMGFSR) lie on the Cytoplasmic side of the membrane. The chain crosses the membrane as a helical span at residues 340-360 (LGLAIGGAIGYIGGGWLFDLG). Over 361–367 (KSAHQPE) the chain is Periplasmic. A helical membrane pass occupies residues 368 to 388 (LPWMMLGIIGIFTFLALGWQF). The Cytoplasmic segment spans residues 389–402 (SQKRATRRLLERDA).

It belongs to the major facilitator superfamily. DHA1 family. MdtH (TC 2.A.1.2.21) subfamily.

The protein resides in the cell inner membrane. In Shigella sonnei (strain Ss046), this protein is Multidrug resistance protein MdtH.